We begin with the raw amino-acid sequence, 433 residues long: Enolase (433 aa).

Gln-167 provides a ligand contact to (2R)-2-phosphoglycerate. Glu-209 serves as the catalytic Proton donor. Mg(2+) is bound by residues Asp-246, Glu-291, and Asp-318. (2R)-2-phosphoglycerate is bound by residues Lys-343, Arg-372, Ser-373, and Lys-394. The Proton acceptor role is filled by Lys-343.

The protein belongs to the enolase family. In terms of assembly, component of the RNA degradosome, a multiprotein complex involved in RNA processing and mRNA degradation. Requires Mg(2+) as cofactor.

The protein localises to the cytoplasm. The protein resides in the secreted. It is found in the cell surface. It carries out the reaction (2R)-2-phosphoglycerate = phosphoenolpyruvate + H2O. Its pathway is carbohydrate degradation; glycolysis; pyruvate from D-glyceraldehyde 3-phosphate: step 4/5. Functionally, catalyzes the reversible conversion of 2-phosphoglycerate (2-PG) into phosphoenolpyruvate (PEP). It is essential for the degradation of carbohydrates via glycolysis. This chain is Enolase, found in Histophilus somni (strain 129Pt) (Haemophilus somnus).